The chain runs to 272 residues: Glutamate 5-kinase (272 aa).

Residue Lys14 coordinates ATP. Substrate-binding residues include Ser54, Asp141, and Asn157. ATP-binding positions include 177–178 (SD) and 219–225 (TGGMLSK).

The protein belongs to the glutamate 5-kinase family.

It is found in the cytoplasm. The catalysed reaction is L-glutamate + ATP = L-glutamyl 5-phosphate + ADP. Its pathway is amino-acid biosynthesis; L-proline biosynthesis; L-glutamate 5-semialdehyde from L-glutamate: step 1/2. Functionally, catalyzes the transfer of a phosphate group to glutamate to form L-glutamate 5-phosphate. The protein is Glutamate 5-kinase of Streptococcus pyogenes serotype M28 (strain MGAS6180).